Reading from the N-terminus, the 299-residue chain is Endonuclease 4 (299 aa).

The signal sequence occupies residues 1–24 (MSSSLRQWFARVLVLTQLINGALC). A divalent metal cation contacts are provided by tryptophan 25 and histidine 30. 25 to 30 (WGKEGH) is a substrate binding site. Cysteines 34 and 65 form a disulfide. A divalent metal cation is bound by residues aspartate 69 and histidine 84. Substrate-binding positions include 69-75 (DEIKHHW), 84-87 (HYVD), and 94-99 (NYEYCR). Disulfide bonds link cysteine 93-cysteine 246, cysteine 101-cysteine 111, and cysteine 226-cysteine 233. The substrate site is built by asparagine 118 and tyrosine 136. Asparagine 118 is a glycosylation site (N-linked (GlcNAc...) asparagine). An N-linked (GlcNAc...) asparagine glycan is attached at asparagine 137. Residues histidine 147, aspartate 151, histidine 157, histidine 181, and aspartate 185 each contribute to the a divalent metal cation site. The substrate binding stretch occupies residues 147 to 196 (HFIGDIHQPLHVGFLGDEGGNTITVRWYRRKTNLHHVWDNMIIESALKTY). N-linked (GlcNAc...) asparagine glycans are attached at residues asparagine 198, asparagine 211, and asparagine 229. Positions 284 to 299 (ATLNRIFSSKPKHAGS) are cleaved as a propeptide — removed in mature form.

The protein belongs to the nuclease type I family. In terms of assembly, monomer. It depends on Mn(2+) as a cofactor. The cofactor is Ca(2+).

It catalyses the reaction Endonucleolytic cleavage to 5'-phosphomononucleotide and 5'-phosphooligonucleotide end-products.. In terms of biological role, endonuclease that can use single-stranded RNA and DNA as substrates. In contradiction with PubMed:23620482, cannot hydrolyze single-stranded DNA and does not cleave mismatches. This Arabidopsis thaliana (Mouse-ear cress) protein is Endonuclease 4.